Consider the following 92-residue polypeptide: RNA-binding protein Hfq (92 aa).

The Sm domain maps to 9–68 (DPFLNALRRERVPVSIYLVNGIKLQGQVESFDQFVILLKNTVSQMVYKHAISTVVPSRPF).

It belongs to the Hfq family. In terms of assembly, homohexamer.

In terms of biological role, RNA chaperone that binds small regulatory RNA (sRNAs) and mRNAs to facilitate mRNA translational regulation in response to envelope stress, environmental stress and changes in metabolite concentrations. Also binds with high specificity to tRNAs. This is RNA-binding protein Hfq from Shewanella piezotolerans (strain WP3 / JCM 13877).